We begin with the raw amino-acid sequence, 152 residues long: Large ribosomal subunit protein bL9 (152 aa).

This sequence belongs to the bacterial ribosomal protein bL9 family.

In terms of biological role, binds to the 23S rRNA. This Mycobacterium sp. (strain JLS) protein is Large ribosomal subunit protein bL9.